The chain runs to 358 residues: Probable branched-chain-amino-acid aminotransferase (358 aa).

The residue at position 196 (K196) is an N6-(pyridoxal phosphate)lysine.

The protein belongs to the class-IV pyridoxal-phosphate-dependent aminotransferase family. It depends on pyridoxal 5'-phosphate as a cofactor.

The enzyme catalyses L-leucine + 2-oxoglutarate = 4-methyl-2-oxopentanoate + L-glutamate. It catalyses the reaction L-isoleucine + 2-oxoglutarate = (S)-3-methyl-2-oxopentanoate + L-glutamate. The catalysed reaction is L-valine + 2-oxoglutarate = 3-methyl-2-oxobutanoate + L-glutamate. It functions in the pathway amino-acid biosynthesis; L-isoleucine biosynthesis; L-isoleucine from 2-oxobutanoate: step 4/4. The protein operates within amino-acid biosynthesis; L-leucine biosynthesis; L-leucine from 3-methyl-2-oxobutanoate: step 4/4. Its pathway is amino-acid biosynthesis; L-valine biosynthesis; L-valine from pyruvate: step 4/4. Functionally, acts on leucine, isoleucine and valine. The polypeptide is Probable branched-chain-amino-acid aminotransferase (ilvE) (Staphylococcus aureus (strain N315)).